A 384-amino-acid chain; its full sequence is 2-deoxy-scyllo-inosose synthase (384 aa).

NAD(+) is bound by residues D42, 73–76 (EVHK), 105–109 (GITGN), 129–130 (TT), 140–142 (SLK), and 151–152 (KN). Residue K142 is part of the active site. E184 lines the Co(2+) pocket. E244 is an active-site residue. 2 residues coordinate Co(2+): H247 and H263.

This sequence belongs to the sugar phosphate cyclases superfamily. DOI synthase family. NAD(+) is required as a cofactor. It depends on Co(2+) as a cofactor.

The catalysed reaction is D-glucose 6-phosphate = 2-deoxy-L-scyllo-inosose + phosphate. The protein operates within metabolic intermediate biosynthesis; 2-deoxystreptamine biosynthesis; 2-deoxystreptamine from D-glucose 6-phosphate: step 1/4. It functions in the pathway antibiotic biosynthesis; lividomycin biosynthesis. Its function is as follows. Catalyzes the intramolecular carbocycle formation from D-glucose-6-phosphate to 2-deoxy-scyllo-inosose (DOI). The chain is 2-deoxy-scyllo-inosose synthase (livC) from Streptomyces lividus.